A 1027-amino-acid polypeptide reads, in one-letter code: INO80 complex subunit D (1027 aa).

Lys-87 participates in a covalent cross-link: Glycyl lysine isopeptide (Lys-Gly) (interchain with G-Cter in SUMO2). Ser-132 carries the post-translational modification Phosphoserine. Disordered stretches follow at residues 193-278 (HFSP…VDPP), 519-574 (RGDN…LSMP), 813-850 (RQQYSSDHSHSSPHGSHYDSEHVPSPYSDHITSPHTTS), 914-969 (LSTS…TSPK), and 982-1027 (QLSS…PSPN). Low complexity predominate over residues 201–216 (SQQQPPQQHSHLSPLS). Residues 229–257 (VCKSPQPQNTSLPMQGVAPTTHTIAQARQ) are compositionally biased toward polar residues. The span at 525–559 (KVQHQQQRKPRKKTKPPALTKKHKKKRRRGPRRPQ) shows a compositional bias: basic residues. Residues 914–932 (LSTSLSTPPTTSNSETTQP) show a composition bias toward low complexity. Positions 937 to 954 (VTPSSSSVLPGLPQTSFS) are enriched in polar residues. Positions 1001–1027 (APPTGFTVTGATATSTNNASSPFPSPN) are enriched in low complexity.

The protein belongs to the INO80D family. As to quaternary structure, component of the chromatin remodeling INO80 complex; specifically part of a complex module associated with the N-terminus of INO80.

It localises to the nucleus. Putative regulatory component of the chromatin remodeling INO80 complex which is involved in transcriptional regulation, DNA replication and probably DNA repair. The sequence is that of INO80 complex subunit D from Homo sapiens (Human).